Reading from the N-terminus, the 627-residue chain is Carene synthase, chloroplastic (627 aa).

A chloroplast-targeting transit peptide spans 1 to 36 (MSVISILPLASKSCLYKSLMSSTHELKALCRPIATL). 3 residues coordinate Mg(2+): aspartate 378, aspartate 382, and aspartate 530. The short motif at 378 to 382 (DDMYD) is the DDXXD motif element.

Belongs to the terpene synthase family. Tpsd subfamily. Mg(2+) serves as cofactor. The cofactor is Mn(2+).

It localises to the plastid. The protein resides in the chloroplast. The enzyme catalyses (2E)-geranyl diphosphate = (+)-car-3-ene + diphosphate. It participates in terpene metabolism; oleoresin biosynthesis. Functionally, terpene synthase (TPS) involved in defensive oleoresin formation in conifers in response to insect attack or other injury. The polypeptide is Carene synthase, chloroplastic (JF67) (Picea abies (Norway spruce)).